We begin with the raw amino-acid sequence, 436 residues long: GTPase Der (436 aa).

EngA-type G domains follow at residues 4 to 167 (PTIA…PEQQ) and 176 to 351 (IKFS…ENHR). GTP-binding positions include 10–17 (GRANVGKS), 57–61 (DTGGI), 119–122 (NKID), 182–189 (GRPNVGKS), 229–233 (DTAGM), and 294–297 (NKWD). Residues 352-436 (KRVQSSTLNE…PLHLIARKRN (85 aa)) form the KH-like domain.

It belongs to the TRAFAC class TrmE-Era-EngA-EngB-Septin-like GTPase superfamily. EngA (Der) GTPase family. Associates with the 50S ribosomal subunit.

GTPase that plays an essential role in the late steps of ribosome biogenesis. The protein is GTPase Der of Macrococcus caseolyticus (strain JCSC5402) (Macrococcoides caseolyticum).